Here is a 39-residue protein sequence, read N- to C-terminus: Cygnin (39 aa).

Glutamine 1 is subject to Pyrrolidone carboxylic acid. Cystine bridges form between cysteine 6/cysteine 33, cysteine 12/cysteine 28, and cysteine 16/cysteine 32.

It belongs to the transferrin family.

The chain is Cygnin from Cygnus atratus (Black swan).